The following is a 480-amino-acid chain: ATP synthase subunit beta (480 aa).

Residue 153–160 (GGAGVGKT) coordinates ATP.

The protein belongs to the ATPase alpha/beta chains family. F-type ATPases have 2 components, CF(1) - the catalytic core - and CF(0) - the membrane proton channel. CF(1) has five subunits: alpha(3), beta(3), gamma(1), delta(1), epsilon(1). CF(0) has three main subunits: a(1), b(2) and c(9-12). The alpha and beta chains form an alternating ring which encloses part of the gamma chain. CF(1) is attached to CF(0) by a central stalk formed by the gamma and epsilon chains, while a peripheral stalk is formed by the delta and b chains.

It localises to the cell membrane. The enzyme catalyses ATP + H2O + 4 H(+)(in) = ADP + phosphate + 5 H(+)(out). Functionally, produces ATP from ADP in the presence of a proton gradient across the membrane. The catalytic sites are hosted primarily by the beta subunits. This Lactobacillus johnsonii (strain CNCM I-12250 / La1 / NCC 533) protein is ATP synthase subunit beta.